We begin with the raw amino-acid sequence, 424 residues long: Glutamyl-tRNA reductase (424 aa).

Substrate-binding positions include 51-54 (TCNR), serine 99, 104-106 (EDQ), and glutamine 110. Cysteine 52 serves as the catalytic Nucleophile. Residue 179 to 184 (GGGEMG) coordinates NADP(+).

This sequence belongs to the glutamyl-tRNA reductase family. As to quaternary structure, homodimer.

It carries out the reaction (S)-4-amino-5-oxopentanoate + tRNA(Glu) + NADP(+) = L-glutamyl-tRNA(Glu) + NADPH + H(+). It functions in the pathway porphyrin-containing compound metabolism; protoporphyrin-IX biosynthesis; 5-aminolevulinate from L-glutamyl-tRNA(Glu): step 1/2. Its function is as follows. Catalyzes the NADPH-dependent reduction of glutamyl-tRNA(Glu) to glutamate 1-semialdehyde (GSA). In Methanocorpusculum labreanum (strain ATCC 43576 / DSM 4855 / Z), this protein is Glutamyl-tRNA reductase.